The following is a 493-amino-acid chain: Cobyric acid synthase (493 aa).

The region spanning 260-427 is the GATase cobBQ-type domain; it reads RLSVAAIRLP…RHGYLQDDPA (168 aa). The active site involves His-419.

It belongs to the CobB/CobQ family. CobQ subfamily.

It functions in the pathway cofactor biosynthesis; adenosylcobalamin biosynthesis. Catalyzes amidations at positions B, D, E, and G on adenosylcobyrinic A,C-diamide. NH(2) groups are provided by glutamine, and one molecule of ATP is hydrogenolyzed for each amidation. The sequence is that of Cobyric acid synthase from Corynebacterium efficiens (strain DSM 44549 / YS-314 / AJ 12310 / JCM 11189 / NBRC 100395).